The sequence spans 204 residues: Inactive ribonuclease-like protein 9 (204 aa).

Residues 1-26 form the signal peptide; the sequence is MMRTLITTHPLLLLLLLQQLLQPVQF. 3 disulfide bridges follow: Cys97/Cys152, Cys115/Cys167, and Cys122/Cys129. N-linked (GlcNAc...) asparagine glycosylation is found at Asn130 and Asn142.

Belongs to the pancreatic ribonuclease family.

The protein localises to the secreted. Does not exhibit any ribonuclease activity. This is Inactive ribonuclease-like protein 9 (RNASE9) from Papio anubis (Olive baboon).